The following is a 306-amino-acid chain: tRNA (guanine-N(1)-)-methyltransferase (306 aa).

S-adenosyl-L-methionine contacts are provided by residues G157 and 182–187; that span reads IGDYVL.

This sequence belongs to the RNA methyltransferase TrmD family. Homodimer.

It is found in the cytoplasm. It catalyses the reaction guanosine(37) in tRNA + S-adenosyl-L-methionine = N(1)-methylguanosine(37) in tRNA + S-adenosyl-L-homocysteine + H(+). In terms of biological role, specifically methylates guanosine-37 in various tRNAs. This chain is tRNA (guanine-N(1)-)-methyltransferase, found in Bifidobacterium adolescentis (strain ATCC 15703 / DSM 20083 / NCTC 11814 / E194a).